A 660-amino-acid chain; its full sequence is Probable cation-transporting P-type ATPase J (660 aa).

5 helical membrane-spanning segments follow: residues 33–53, 60–80, 94–114, 261–281, and 292–312; these read WAALALGLFSAGLLTQLCGAP, LFLACYATGGWEPGLAGLQAL, AAIGAAAIGQIAEGALLIVIF, IGMVAVTLAVFAVPPLWGETL, and MIVASPCAVVLATMPPLLAAI. Residue Asp340 is the 4-aspartylphosphate intermediate of the active site. Mg(2+) contacts are provided by Asp544 and Asp548. A helical membrane pass occupies residues 598-618; the sequence is IVVANLIVAVTFIAGLVVWDL.

The protein belongs to the cation transport ATPase (P-type) (TC 3.A.3) family. Type IB subfamily.

The protein localises to the cell membrane. It carries out the reaction ATP + H2O = ADP + phosphate + H(+). This is Probable cation-transporting P-type ATPase J (ctpJ) from Mycobacterium tuberculosis (strain CDC 1551 / Oshkosh).